Here is a 257-residue protein sequence, read N- to C-terminus: UPF0246 protein CLL_A2361 (257 aa).

Belongs to the UPF0246 family.

This is UPF0246 protein CLL_A2361 from Clostridium botulinum (strain Eklund 17B / Type B).